Reading from the N-terminus, the 312-residue chain is tRNA-dihydrouridine(16) synthase (312 aa).

Residues 7–9 (PME) and Q68 contribute to the FMN site. The active-site Proton donor is the C98. Residues K139, 200-202 (NGE), and 224-225 (GR) each bind FMN.

This sequence belongs to the Dus family. DusC subfamily. Requires FMN as cofactor.

The enzyme catalyses 5,6-dihydrouridine(16) in tRNA + NADP(+) = uridine(16) in tRNA + NADPH + H(+). It carries out the reaction 5,6-dihydrouridine(16) in tRNA + NAD(+) = uridine(16) in tRNA + NADH + H(+). In terms of biological role, catalyzes the synthesis of 5,6-dihydrouridine (D), a modified base found in the D-loop of most tRNAs, via the reduction of the C5-C6 double bond in target uridines. Specifically modifies U16 in tRNAs. The sequence is that of tRNA-dihydrouridine(16) synthase from Salmonella typhimurium (strain LT2 / SGSC1412 / ATCC 700720).